Consider the following 683-residue polypeptide: Protein kinase C eta type (683 aa).

The region spanning 1-118 (MSSGTMKFNG…LRTAGTSDTF (118 aa)) is the C2 domain. Phosphoserine occurs at positions 28 and 32. 2 consecutive Phorbol-ester/DAG-type zinc fingers follow at residues 171–222 (GHKF…VTAC) and 245–295 (PHKF…APNC). Serine 317 carries the phosphoserine modification. A Protein kinase domain is found at 355 to 614 (FEFIRVLGKG…EHEILRHPFF (260 aa)). Residues 361–369 (LGKGSFGKV) and lysine 384 each bind ATP. Aspartate 479 (proton acceptor) is an active-site residue. The residue at position 513 (threonine 513) is a Phosphothreonine; by PDPK1. In terms of domain architecture, AGC-kinase C-terminal spans 615–683 (KEIDWAQLNH…FSYVSPELQL (69 aa)). Threonine 656 bears the Phosphothreonine mark. Position 675 is a phosphoserine (serine 675).

It belongs to the protein kinase superfamily. AGC Ser/Thr protein kinase family. PKC subfamily. Interacts with FYN. Interacts with RALA. Interacts with DGKQ. As to expression, predominantly expressed in lung and skin.

The protein resides in the cytoplasm. The enzyme catalyses L-seryl-[protein] + ATP = O-phospho-L-seryl-[protein] + ADP + H(+). The catalysed reaction is L-threonyl-[protein] + ATP = O-phospho-L-threonyl-[protein] + ADP + H(+). Its activity is regulated as follows. Novel PKCs (PRKCD, PRKCE, PRKCH and PRKCQ) are calcium-insensitive, but activated by diacylglycerol (DAG) and phosphatidylserine. Three specific sites; Thr-513 (activation loop of the kinase domain), Thr-656 (turn motif) and Ser-675 (hydrophobic region), need to be phosphorylated for its full activation. Calcium-independent, phospholipid- and diacylglycerol (DAG)-dependent serine/threonine-protein kinase that is involved in the regulation of cell differentiation in keratinocytes and pre-B cell receptor, mediates regulation of epithelial tight junction integrity and foam cell formation, and is required for glioblastoma proliferation and apoptosis prevention in MCF-7 cells. In keratinocytes, binds and activates the tyrosine kinase FYN, which in turn blocks epidermal growth factor receptor (EGFR) signaling and leads to keratinocyte growth arrest and differentiation. Associates with the cyclin CCNE1-CDK2-CDKN1B complex and inhibits CDK2 kinase activity, leading to RB1 dephosphorylation and thereby G1 arrest in keratinocytes. In association with RALA activates actin depolymerization, which is necessary for keratinocyte differentiation. In the pre-B cell receptor signaling, functions downstream of BLNK by up-regulating IRF4, which in turn activates L chain gene rearrangement. Regulates epithelial tight junctions (TJs) by phosphorylating occludin (OCLN) on threonine residues, which is necessary for the assembly and maintenance of TJs. In association with PLD2 and via TLR4 signaling, is involved in lipopolysaccharide (LPS)-induced RGS2 down-regulation and foam cell formation. Upon PMA stimulation, mediates glioblastoma cell proliferation by activating the mTOR pathway, the PI3K/AKT pathway and the ERK1-dependent phosphorylation of ELK1. Involved in the protection of glioblastoma cells from irradiation-induced apoptosis by preventing caspase-9 activation. In camptothecin-treated MCF-7 cells, regulates NF-kappa-B upstream signaling by activating IKBKB, and confers protection against DNA damage-induced apoptosis. Promotes oncogenic functions of ATF2 in the nucleus while blocking its apoptotic function at mitochondria. Phosphorylates ATF2 which promotes its nuclear retention and transcriptional activity and negatively regulates its mitochondrial localization. This is Protein kinase C eta type (Prkch) from Mus musculus (Mouse).